The sequence spans 156 residues: Small ribosomal subunit protein uS7 (156 aa).

The protein belongs to the universal ribosomal protein uS7 family. Part of the 30S ribosomal subunit. Contacts proteins S9 and S11.

In terms of biological role, one of the primary rRNA binding proteins, it binds directly to 16S rRNA where it nucleates assembly of the head domain of the 30S subunit. Is located at the subunit interface close to the decoding center, probably blocks exit of the E-site tRNA. This Streptococcus pyogenes serotype M12 (strain MGAS2096) protein is Small ribosomal subunit protein uS7.